The following is a 370-amino-acid chain: 1-propanol dehydrogenase PduQ (370 aa).

The protein belongs to the iron-containing alcohol dehydrogenase family. As to quaternary structure, interacts with PduP, probably via the N-terminus of PduQ. Requires Fe cation as cofactor.

It is found in the bacterial microcompartment. The enzyme catalyses 1-propanol + NAD(+) = propanal + NADH + H(+). It participates in polyol metabolism; 1,2-propanediol degradation. An iron-dependent alcohol dehydrogenase required for optimal 1,2-propanediol (1,2-PD) degradation. NAD(+) and NADH are regenerated internally within the bacterial microcompartment (BMC) dedicated to 1,2-PD degradation by the PduP and PduQ enzymes, which reduce NAD(+) and oxidize NADH respectively, although there must also be cofactor transport across the BMC. In terms of biological role, expression of a cosmid containing the full 21-gene pdu operon in E.coli allows E.coli to grow on 1,2-propanediol (1,2-PD) with the appearance of bacterial microcompartments (BMC) in its cytoplasm. Its function is as follows. The 1,2-PD-specific bacterial microcompartment (BMC) concentrates low levels of 1,2-PD catabolic enzymes, concentrates volatile reaction intermediates thus enhancing pathway flux and keeps the level of toxic, mutagenic propionaldehyde low. In Citrobacter freundii, this protein is 1-propanol dehydrogenase PduQ.